The chain runs to 325 residues: UDP-N-acetylenolpyruvoylglucosamine reductase (325 aa).

Residues 40 to 221 enclose the FAD-binding PCMH-type domain; that stretch reads RTGGLAELFY…RAAMDEVALH (182 aa). R186 is an active-site residue. S235 functions as the Proton donor in the catalytic mechanism. E305 is an active-site residue.

It belongs to the MurB family. It depends on FAD as a cofactor.

It is found in the cytoplasm. It catalyses the reaction UDP-N-acetyl-alpha-D-muramate + NADP(+) = UDP-N-acetyl-3-O-(1-carboxyvinyl)-alpha-D-glucosamine + NADPH + H(+). It functions in the pathway cell wall biogenesis; peptidoglycan biosynthesis. In terms of biological role, cell wall formation. The sequence is that of UDP-N-acetylenolpyruvoylglucosamine reductase from Bartonella henselae (strain ATCC 49882 / DSM 28221 / CCUG 30454 / Houston 1) (Rochalimaea henselae).